A 400-amino-acid polypeptide reads, in one-letter code: Phosphoglycerate kinase (400 aa).

Residues 23–25, Arg38, 61–64, Arg120, and Arg153 each bind substrate; these read DLN and HFGR. ATP-binding positions include Lys203, Glu325, and 355–358; that span reads GGDT.

The protein belongs to the phosphoglycerate kinase family. In terms of assembly, monomer.

The protein resides in the cytoplasm. It catalyses the reaction (2R)-3-phosphoglycerate + ATP = (2R)-3-phospho-glyceroyl phosphate + ADP. The protein operates within carbohydrate degradation; glycolysis; pyruvate from D-glyceraldehyde 3-phosphate: step 2/5. The polypeptide is Phosphoglycerate kinase (Allorhizobium ampelinum (strain ATCC BAA-846 / DSM 112012 / S4) (Agrobacterium vitis (strain S4))).